A 145-amino-acid chain; its full sequence is Probable transport accessory protein MmpS2 (145 aa).

The chain crosses the membrane as a helical span at residues M11–L31.

Belongs to the MmpS family.

It localises to the cell membrane. This chain is Probable transport accessory protein MmpS2 (mmpS2), found in Mycobacterium bovis (strain ATCC BAA-935 / AF2122/97).